The following is a 343-amino-acid chain: Farnesyl pyrophosphate synthase (343 aa).

Isopentenyl diphosphate-binding residues include Lys49, Arg52, and Gln87. Residues Asp94 and Asp98 each contribute to the Mg(2+) site. Arg103 is a binding site for dimethylallyl diphosphate. Residue Arg104 participates in isopentenyl diphosphate binding. 5 residues coordinate dimethylallyl diphosphate: Lys191, Thr192, Gln230, Lys247, and Lys256.

The protein belongs to the FPP/GGPP synthase family. Requires Mg(2+) as cofactor. As to expression, expressed both in apical and sub-apical cells of glandular secretory trichomes.

The protein localises to the cytoplasm. Its subcellular location is the nucleus. The catalysed reaction is isopentenyl diphosphate + dimethylallyl diphosphate = (2E)-geranyl diphosphate + diphosphate. The enzyme catalyses isopentenyl diphosphate + (2E)-geranyl diphosphate = (2E,6E)-farnesyl diphosphate + diphosphate. It functions in the pathway isoprenoid biosynthesis; farnesyl diphosphate biosynthesis; farnesyl diphosphate from geranyl diphosphate and isopentenyl diphosphate: step 1/1. The protein operates within sesquiterpene biosynthesis. It participates in isoprenoid biosynthesis; geranyl diphosphate biosynthesis; geranyl diphosphate from dimethylallyl diphosphate and isopentenyl diphosphate: step 1/1. Functionally, involved in the biosynthesis of the antimalarial endoperoxide artemisinin. Catalyzes the sequential condensation of isopentenyl pyrophosphate with the allylic pyrophosphates, dimethylallyl pyrophosphate, and then with the resultant geranylpyrophosphate to the ultimate product farnesyl pyrophosphate. Promotes anti-malarial and antimicrobial (toward Gram-positive bacteria B.subtilis and S.aureus) activities of plant crude extract probably by triggering artemisinin levels. This chain is Farnesyl pyrophosphate synthase, found in Artemisia annua (Sweet wormwood).